Here is a 100-residue protein sequence, read N- to C-terminus: Aspartyl/glutamyl-tRNA(Asn/Gln) amidotransferase subunit C (100 aa).

The protein belongs to the GatC family. In terms of assembly, heterotrimer of A, B and C subunits.

The enzyme catalyses L-glutamyl-tRNA(Gln) + L-glutamine + ATP + H2O = L-glutaminyl-tRNA(Gln) + L-glutamate + ADP + phosphate + H(+). It catalyses the reaction L-aspartyl-tRNA(Asn) + L-glutamine + ATP + H2O = L-asparaginyl-tRNA(Asn) + L-glutamate + ADP + phosphate + 2 H(+). Its function is as follows. Allows the formation of correctly charged Asn-tRNA(Asn) or Gln-tRNA(Gln) through the transamidation of misacylated Asp-tRNA(Asn) or Glu-tRNA(Gln) in organisms which lack either or both of asparaginyl-tRNA or glutaminyl-tRNA synthetases. The reaction takes place in the presence of glutamine and ATP through an activated phospho-Asp-tRNA(Asn) or phospho-Glu-tRNA(Gln). This Novosphingobium aromaticivorans (strain ATCC 700278 / DSM 12444 / CCUG 56034 / CIP 105152 / NBRC 16084 / F199) protein is Aspartyl/glutamyl-tRNA(Asn/Gln) amidotransferase subunit C.